A 394-amino-acid polypeptide reads, in one-letter code: Protein arginine N-methyltransferase 8 (394 aa).

The N-myristoyl glycine moiety is linked to residue Gly-2. The disordered stretch occupies residues Met-16–Ala-40. 2 short sequence motifs (SH3-binding) span residues Pro-29–Pro-42 and Pro-53–Arg-58. Positions Pro-30–Pro-39 are enriched in pro residues. An Omega-N-methylarginine; by autocatalysis modification is found at Arg-58. The residue at position 73 (Arg-73) is an Asymmetric dimethylarginine; by autocatalysis. The SAM-dependent MTase PRMT-type domain maps to Arg-73–Arg-394. S-adenosyl-L-methionine is bound by residues His-86, Arg-95, Gly-119, Gly-119–Thr-122, Glu-141, and Glu-170. Active-site residues include Glu-185 and Glu-194.

Belongs to the class I-like SAM-binding methyltransferase superfamily. Protein arginine N-methyltransferase family. PRMT8 subfamily. Homodimer. Tetramer; individual homodimers associates to form a homotetramer. Homooctamer; individual homodimers associates to form a homooctamer and homooligomerization is required for proper localization to the cell membrane. Heterodimer with PRMT1; heterodimerization may recruit PRMT1 activity to the plasma membrane. Interacts with PRMT2 (via the SH3 domain). Interacts with FYN (via the SH3 domain). Interacts with EWS; independently of EWS methylation status. In terms of tissue distribution, brain-specific.

Its subcellular location is the cell membrane. It carries out the reaction L-arginyl-[protein] + S-adenosyl-L-methionine = N(omega)-methyl-L-arginyl-[protein] + S-adenosyl-L-homocysteine + H(+). The catalysed reaction is L-arginyl-[protein] + 2 S-adenosyl-L-methionine = N(omega),N(omega)-dimethyl-L-arginyl-[protein] + 2 S-adenosyl-L-homocysteine + 2 H(+). S-adenosyl-L-methionine-dependent and membrane-associated arginine methyltransferase that can both catalyze the formation of omega-N monomethylarginine (MMA) and asymmetrical dimethylarginine (aDMA) in proteins such as NIFK, myelin basic protein, histone H4, H2A and H2A/H2B dimer. Able to mono- and dimethylate EWS protein; however its precise role toward EWS remains unclear as it still interacts with fully methylated EWS. This chain is Protein arginine N-methyltransferase 8, found in Homo sapiens (Human).